The chain runs to 780 residues: Tyrosine-protein phosphatase non-receptor type 12 (780 aa).

N-acetylmethionine is present on Met-1. Ser-19 is subject to Phosphoserine. Residues 28–293 (FARDFMRLRR…ELVHRAIAQL (266 aa)) form the Tyrosine-protein phosphatase domain. Substrate is bound by residues Arg-36, 63–67 (RYKDI), Asp-199, 231–237 (CSAGCGR), and Gln-278. The active-site Phosphocysteine intermediate is the Cys-231. Residues Ser-332, Ser-435, Ser-449, and Ser-468 each carry the phosphoserine modification. Residues 345–438 (VEGDAKEEIL…KLERNLSFEI (94 aa)) are interaction with TGFB1I1. A compositionally biased stretch (polar residues) spans 502–519 (QSNKVSVTPPEESQNSDT). 3 disordered regions span residues 502 to 639 (QSNK…STES), 657 to 725 (GTTH…EKCD), and 744 to 780 (SDKR…SEWT). Residues Thr-509 and Thr-519 each carry the phosphothreonine modification. Over residues 521 to 533 (PRPDRLPLDEKGH) the composition is skewed to basic and acidic residues. Composition is skewed to polar residues over residues 552 to 577 (EGNS…TQVE) and 587 to 601 (TSPL…TNPL). Residue Ser-567 is modified to Phosphoserine. Phosphothreonine is present on Thr-569. Phosphoserine is present on residues Ser-571 and Ser-596. Thr-598 bears the Phosphothreonine mark. Residues 602–613 (HSDDSDSDERNS) are compositionally biased toward basic and acidic residues. Residues Ser-603, Ser-606, Ser-608, and Ser-613 each carry the phosphoserine modification. Over residues 622–639 (TNISTASATVSAATSTES) the composition is skewed to low complexity. Residues Ser-673 and Ser-689 each carry the phosphoserine modification. Residues 690–703 (EHNTPVRSEWSELQ) are compositionally biased toward polar residues. Thr-693 bears the Phosphothreonine mark. Composition is skewed to basic and acidic residues over residues 704-725 (SQER…EKCD) and 771-780 (GPRDPPSEWT).

This sequence belongs to the protein-tyrosine phosphatase family. Non-receptor class 4 subfamily. Interacts with TGFB1I1. Interacts with PSTPIP1. Interacts with PTK2B/PYK2. Interacts with LPXN. Interacts with SORBS2; this interaction greatly enhances WASF1 dephosphorylation and might mediate partial translocation to focal adhesion sites. Phosphorylated by STK24/MST3 and this results in inhibition of its activity.

The protein resides in the cytoplasm. It localises to the cell junction. The protein localises to the focal adhesion. It is found in the cell projection. Its subcellular location is the podosome. It catalyses the reaction O-phospho-L-tyrosyl-[protein] + H2O = L-tyrosyl-[protein] + phosphate. Dephosphorylates a range of proteins, and thereby regulates cellular signaling cascades. Dephosphorylates cellular tyrosine kinases, such as ERBB2 and PTK2B/PYK2, and thereby regulates signaling via ERBB2 and PTK2B/PYK2. Selectively dephosphorylates ERBB2 phosphorylated at 'Tyr-1112', 'Tyr-1196', and/or 'Tyr-1248'. The protein is Tyrosine-protein phosphatase non-receptor type 12 (PTPN12) of Homo sapiens (Human).